The following is a 100-amino-acid chain: Large ribosomal subunit protein uL23 (100 aa).

The protein belongs to the universal ribosomal protein uL23 family. Part of the 50S ribosomal subunit. Contacts protein L29, and trigger factor when it is bound to the ribosome.

One of the early assembly proteins it binds 23S rRNA. One of the proteins that surrounds the polypeptide exit tunnel on the outside of the ribosome. Forms the main docking site for trigger factor binding to the ribosome. In Edwardsiella ictaluri (strain 93-146), this protein is Large ribosomal subunit protein uL23.